The sequence spans 254 residues: Allene oxide cyclase 1, chloroplastic (254 aa).

Residues 1-78 constitute a chloroplast transit peptide; the sequence is MASSTISLQS…QNLGNTENPR (78 aa). Positions 44–56 are enriched in low complexity; sequence SNGPGSSSPTSFT. The segment at 44-79 is disordered; it reads SNGPGSSSPTSFTPKKKLTPTRALSQNLGNTENPRP. A compositionally biased stretch (polar residues) spans 65–77; the sequence is RALSQNLGNTENP.

This sequence belongs to the allene oxide cyclase family. In terms of tissue distribution, highly expressed in fully developed leaves.

It is found in the plastid. The protein resides in the chloroplast. It catalyses the reaction (9Z,13S,15Z)-12,13-epoxyoctadeca-9,11,15-trienoate = (9S,13S,15Z)-12-oxophyto-10,15-dienoate. Involved in the production of 12-oxo-phytodienoic acid (OPDA), a precursor of jasmonic acid. This is Allene oxide cyclase 1, chloroplastic (AOC1) from Arabidopsis thaliana (Mouse-ear cress).